Here is a 262-residue protein sequence, read N- to C-terminus: MLDPIAIQLGPLAIRWYALCIVTGLILAVYLTMKEAPRKKIIPDDILDFILVAFPLAILGARLYYVIFRFDYYSQNLGEIFAIWNGGLAIYGGLITGALVLYIFADRKLINTWDFLDIAAPSVMIAQSLGRWGNFFNQEAYGATVDNLDYLPGFIRDQMYIEGSYRQPTFLYESLWNLLGFALILIFRRKWKSLRRGHITAFYLIWYGFGRMVIEGMRTDSLMFFGLRVSQWLSVVLIGLGIMIVIYQNRKKAPYYITEEEN.

4 consecutive transmembrane segments (helical) span residues 9–29 (LGPL…ILAV), 41–61 (IIPD…ILGA), 80–100 (IFAI…GALV), and 109–129 (LINT…AQSL). Residue arginine 131 participates in a 1,2-diacyl-sn-glycero-3-phospho-(1'-sn-glycerol) binding. The next 3 helical transmembrane spans lie at 167 to 187 (QPTF…ILIF), 197 to 217 (GHIT…IEGM), and 226 to 246 (GLRV…MIVI).

The protein belongs to the Lgt family.

The protein resides in the cell membrane. It carries out the reaction L-cysteinyl-[prolipoprotein] + a 1,2-diacyl-sn-glycero-3-phospho-(1'-sn-glycerol) = an S-1,2-diacyl-sn-glyceryl-L-cysteinyl-[prolipoprotein] + sn-glycerol 1-phosphate + H(+). Its pathway is protein modification; lipoprotein biosynthesis (diacylglyceryl transfer). Its function is as follows. Catalyzes the transfer of the diacylglyceryl group from phosphatidylglycerol to the sulfhydryl group of the N-terminal cysteine of a prolipoprotein, the first step in the formation of mature lipoproteins. The chain is Phosphatidylglycerol--prolipoprotein diacylglyceryl transferase from Streptococcus pneumoniae (strain P1031).